A 208-amino-acid chain; its full sequence is Small ribosomal subunit protein uS4 (208 aa).

In terms of domain architecture, S4 RNA-binding spans Arg98–Lys158.

Belongs to the universal ribosomal protein uS4 family. Part of the 30S ribosomal subunit. Contacts protein S5. The interaction surface between S4 and S5 is involved in control of translational fidelity.

Functionally, one of the primary rRNA binding proteins, it binds directly to 16S rRNA where it nucleates assembly of the body of the 30S subunit. With S5 and S12 plays an important role in translational accuracy. This Magnetococcus marinus (strain ATCC BAA-1437 / JCM 17883 / MC-1) protein is Small ribosomal subunit protein uS4.